Consider the following 94-residue polypeptide: Integration host factor subunit beta (94 aa).

Belongs to the bacterial histone-like protein family. As to quaternary structure, heterodimer of an alpha and a beta chain.

Functionally, this protein is one of the two subunits of integration host factor, a specific DNA-binding protein that functions in genetic recombination as well as in transcriptional and translational control. This chain is Integration host factor subunit beta, found in Escherichia coli (strain UTI89 / UPEC).